A 273-amino-acid polypeptide reads, in one-letter code: MKLIENWFSERYSDNLQLSFRVSDQLLSIKTDYQRIDLFDTYDFGKLLAIDGTVQLTERDEYIYHELITMIPYHMTKNPPQSALVIGGGDGGAARRLLDLGLNKIVNVEIDGQVVEVSKRFFPDLSSAFTDKRVNLIIDDGIKYVRKCNEKFDLVIIDSTDPEGPAEGLFSMEFYSDITKILSDGGVIVSQSGSPFYQPKALKLAYTGMRRLFKDVKVYTGFIPTYPSGFWSFTIASEDAMNPRKPAIKGKYFNEDVLDGVFKLPQFVKDLIT.

The PABS domain occupies 5–238; the sequence is ENWFSERYSD…GFWSFTIASE (234 aa). Glutamine 34 contacts S-methyl-5'-thioadenosine. 2 residues coordinate spermidine: histidine 65 and aspartate 90. S-methyl-5'-thioadenosine is bound by residues glutamate 109 and 140–141; that span reads DG. The Proton acceptor role is filled by aspartate 158. Residue 158–161 coordinates spermidine; it reads DSTD. Residue proline 165 coordinates S-methyl-5'-thioadenosine.

Belongs to the spermidine/spermine synthase family. As to quaternary structure, homodimer or homotetramer.

It is found in the cytoplasm. The catalysed reaction is S-adenosyl 3-(methylsulfanyl)propylamine + putrescine = S-methyl-5'-thioadenosine + spermidine + H(+). The protein operates within amine and polyamine biosynthesis; spermidine biosynthesis; spermidine from putrescine: step 1/1. In terms of biological role, catalyzes the irreversible transfer of a propylamine group from the amino donor S-adenosylmethioninamine (decarboxy-AdoMet) to putrescine (1,4-diaminobutane) to yield spermidine. This is Polyamine aminopropyltransferase from Thermoplasma volcanium (strain ATCC 51530 / DSM 4299 / JCM 9571 / NBRC 15438 / GSS1).